The sequence spans 557 residues: Probable phenylalanine--tRNA ligase beta subunit (557 aa).

In terms of domain architecture, B5 spans 276–352 (MHNRSYVMGL…IAHGFNNFRR (77 aa)). The Mg(2+) site is built by Asp330, Asp336, Glu339, and Asp340.

It belongs to the phenylalanyl-tRNA synthetase beta subunit family. Type 2 subfamily. Tetramer of two alpha and two beta subunits. Mg(2+) is required as a cofactor.

It is found in the cytoplasm. It carries out the reaction tRNA(Phe) + L-phenylalanine + ATP = L-phenylalanyl-tRNA(Phe) + AMP + diphosphate + H(+). This chain is Probable phenylalanine--tRNA ligase beta subunit, found in Encephalitozoon cuniculi (strain GB-M1) (Microsporidian parasite).